We begin with the raw amino-acid sequence, 325 residues long: Hydroxymethylglutaryl-CoA lyase, mitochondrial (325 aa).

Residues 1 to 27 (MASVRKAFPRRLVGLTSLRAVSTSSMG) constitute a mitochondrion transit peptide. Residues 33 to 300 (VKIVEVGPRD…HTGVNLQKLL (268 aa)) enclose the Pyruvate carboxyltransferase domain. Arginine 41 contributes to the substrate binding site. Aspartate 42 is an a divalent metal cation binding site. Lysine 48 is subject to N6-acetyllysine; alternate. Lysine 48 bears the N6-succinyllysine; alternate mark. At lysine 111 the chain carries N6-acetyllysine. An N6-acetyllysine; alternate mark is found at lysine 137 and lysine 179. Lysine 137 and lysine 179 each carry N6-succinyllysine; alternate. A divalent metal cation is bound by residues histidine 233 and histidine 235. The active site involves cysteine 266. Position 275 (asparagine 275) interacts with a divalent metal cation. The Microbody targeting signal motif lies at 323-325 (CKL). At lysine 324 the chain carries N6-acetyllysine.

Belongs to the HMG-CoA lyase family. As to quaternary structure, homodimer; disulfide-linked. Can also form homotetramers.

It is found in the mitochondrion matrix. The protein localises to the peroxisome. It carries out the reaction (3S)-3-hydroxy-3-methylglutaryl-CoA = acetoacetate + acetyl-CoA. It functions in the pathway metabolic intermediate metabolism; (S)-3-hydroxy-3-methylglutaryl-CoA degradation; acetoacetate from (S)-3-hydroxy-3-methylglutaryl-CoA: step 1/1. Mitochondrial 3-hydroxy-3-methylglutaryl-CoA lyase that catalyzes a cation-dependent cleavage of (S)-3-hydroxy-3-methylglutaryl-CoA into acetyl-CoA and acetoacetate, a key step in ketogenesis. Terminal step in leucine catabolism. Ketone bodies (beta-hydroxybutyrate, acetoacetate and acetone) are essential as an alternative source of energy to glucose, as lipid precursors and as regulators of metabolism. This chain is Hydroxymethylglutaryl-CoA lyase, mitochondrial (Hmgcl), found in Mus musculus (Mouse).